A 239-amino-acid polypeptide reads, in one-letter code: Peptidyl-tRNA hydrolase (239 aa).

Tyr-14 is a tRNA binding site. His-19 functions as the Proton acceptor in the catalytic mechanism. 3 residues coordinate tRNA: Phe-64, Asn-66, and Asn-112. Positions 186 to 239 (RTAPPRPSTGTGRPPAKTPARAEEPPAPAASPAPATAPLPDARSPLQKLVDRFK) are disordered. A compositionally biased stretch (low complexity) spans 193-204 (STGTGRPPAKTP). Residues 210-222 (PPAPAASPAPATA) show a composition bias toward pro residues.

It belongs to the PTH family. In terms of assembly, monomer.

Its subcellular location is the cytoplasm. The enzyme catalyses an N-acyl-L-alpha-aminoacyl-tRNA + H2O = an N-acyl-L-amino acid + a tRNA + H(+). Hydrolyzes ribosome-free peptidyl-tRNAs (with 1 or more amino acids incorporated), which drop off the ribosome during protein synthesis, or as a result of ribosome stalling. Its function is as follows. Catalyzes the release of premature peptidyl moieties from peptidyl-tRNA molecules trapped in stalled 50S ribosomal subunits, and thus maintains levels of free tRNAs and 50S ribosomes. This Ruegeria pomeroyi (strain ATCC 700808 / DSM 15171 / DSS-3) (Silicibacter pomeroyi) protein is Peptidyl-tRNA hydrolase.